We begin with the raw amino-acid sequence, 171 residues long: Ribosome maturation factor RimP (171 aa).

This sequence belongs to the RimP family.

It localises to the cytoplasm. Functionally, required for maturation of 30S ribosomal subunits. This chain is Ribosome maturation factor RimP, found in Oleidesulfovibrio alaskensis (strain ATCC BAA-1058 / DSM 17464 / G20) (Desulfovibrio alaskensis).